Here is a 350-residue protein sequence, read N- to C-terminus: S-adenosylmethionine:tRNA ribosyltransferase-isomerase (350 aa).

Belongs to the QueA family. Monomer.

Its subcellular location is the cytoplasm. It carries out the reaction 7-aminomethyl-7-carbaguanosine(34) in tRNA + S-adenosyl-L-methionine = epoxyqueuosine(34) in tRNA + adenine + L-methionine + 2 H(+). It functions in the pathway tRNA modification; tRNA-queuosine biosynthesis. Its function is as follows. Transfers and isomerizes the ribose moiety from AdoMet to the 7-aminomethyl group of 7-deazaguanine (preQ1-tRNA) to give epoxyqueuosine (oQ-tRNA). The sequence is that of S-adenosylmethionine:tRNA ribosyltransferase-isomerase from Bacillus cytotoxicus (strain DSM 22905 / CIP 110041 / 391-98 / NVH 391-98).